A 94-amino-acid chain; its full sequence is uncharacterized protein (94 aa).

This is an uncharacterized protein from Saccharomyces cerevisiae (strain ATCC 204508 / S288c) (Baker's yeast).